Consider the following 465-residue polypeptide: Poly(A) polymerase I (465 aa).

Catalysis depends on residues aspartate 80, aspartate 82, and aspartate 162. Residues 430-465 (APPEQKGMLNELDDDPAPRRRRSRPRKRAPRREGTV) form a disordered region. The span at 448-459 (RRRRSRPRKRAP) shows a compositional bias: basic residues.

This sequence belongs to the tRNA nucleotidyltransferase/poly(A) polymerase family.

It carries out the reaction RNA(n) + ATP = RNA(n)-3'-adenine ribonucleotide + diphosphate. In terms of biological role, adds poly(A) tail to the 3' end of many RNAs, which usually targets these RNAs for decay. Plays a significant role in the global control of gene expression, through influencing the rate of transcript degradation, and in the general RNA quality control. In Salmonella typhimurium (strain LT2 / SGSC1412 / ATCC 700720), this protein is Poly(A) polymerase I.